A 555-amino-acid chain; its full sequence is MNPSTALATVLVDTLVRLGLRHLVLSPGSRSAPLAYAAARAADEGRLTLHVRVDERSAGFLALGLARAGELVAVVTTSGTAVANLHPAVLEAHHAGVPLVVLSADRPHELRGSGASQTADAQARMFLPSVRYSADVPAPVDPDRQAPAWRSLLSRAVAFARGLRGDGPGPVHLNVGFADPLTPSPGDVPPGPGLTQVHGPGAPAPVALERGPRTLVLAGDAPDPATGAAARELAESAGWPLLAEPSSGARGGERAVGPYRLLLDAVDAEGPLGAVERVVLFGHPTLSRPVTRLLARDDVELVVVSAAGTWSDAGFRAARVVPAAQVQGPPGAGEQEFAARWDRAGKLAADAVDAALDAEAGLSGPWAAREVVAACAADGSTLVVAASNAIRDVDLTARPLGVRTVSNRGLAGIDGTTATAEGVALATGPTRLLLGDLAFLHDANALLPVPGEVRPDLTVVVVNDDGGGIFETLEHASAVDRATFERVVATPHGVDVAALCAAFGVAHSRPATRAEALAALTARPRGLRVVELVTARDRVRPRLERIAAAVRAAVA.

Belongs to the TPP enzyme family. MenD subfamily. As to quaternary structure, homodimer. Mg(2+) is required as a cofactor. It depends on Mn(2+) as a cofactor. Thiamine diphosphate serves as cofactor.

The enzyme catalyses isochorismate + 2-oxoglutarate + H(+) = 5-enolpyruvoyl-6-hydroxy-2-succinyl-cyclohex-3-ene-1-carboxylate + CO2. It participates in quinol/quinone metabolism; 1,4-dihydroxy-2-naphthoate biosynthesis; 1,4-dihydroxy-2-naphthoate from chorismate: step 2/7. Its pathway is quinol/quinone metabolism; menaquinone biosynthesis. In terms of biological role, catalyzes the thiamine diphosphate-dependent decarboxylation of 2-oxoglutarate and the subsequent addition of the resulting succinic semialdehyde-thiamine pyrophosphate anion to isochorismate to yield 2-succinyl-5-enolpyruvyl-6-hydroxy-3-cyclohexene-1-carboxylate (SEPHCHC). This is 2-succinyl-5-enolpyruvyl-6-hydroxy-3-cyclohexene-1-carboxylate synthase from Kineococcus radiotolerans (strain ATCC BAA-149 / DSM 14245 / SRS30216).